Reading from the N-terminus, the 318-residue chain is L-lactate dehydrogenase (318 aa).

NAD(+)-binding positions include valine 18, aspartate 39, lysine 44, tyrosine 69, and 83–84 (GA). Residues glutamine 86 and arginine 92 each contribute to the substrate site. NAD(+) contacts are provided by residues serine 105, 122–124 (VSN), and serine 147. 124-127 (NPVD) contributes to the substrate binding site. Position 152-155 (152-155 (DTSR)) interacts with substrate. Histidine 179 acts as the Proton acceptor in catalysis. Tyrosine 225 is subject to Phosphotyrosine. Threonine 234 is a substrate binding site.

This sequence belongs to the LDH/MDH superfamily. LDH family. In terms of assembly, homotetramer.

The protein localises to the cytoplasm. It catalyses the reaction (S)-lactate + NAD(+) = pyruvate + NADH + H(+). The protein operates within fermentation; pyruvate fermentation to lactate; (S)-lactate from pyruvate: step 1/1. In terms of biological role, catalyzes the conversion of lactate to pyruvate. In Clostridium botulinum (strain Langeland / NCTC 10281 / Type F), this protein is L-lactate dehydrogenase.